We begin with the raw amino-acid sequence, 465 residues long: Dihydrolipoyl dehydrogenase (465 aa).

FAD contacts are provided by residues 34–42 (EKREAGGTC), Lys51, and Gly114. An intrachain disulfide couples Cys42 to Cys47. NAD(+)-binding positions include 180 to 184 (GGGVI), Glu203, Val237, and 264 to 267 (SIGR). The FAD site is built by Asp307 and Ala315. Catalysis depends on His439, which acts as the Proton acceptor.

It belongs to the class-I pyridine nucleotide-disulfide oxidoreductase family. FAD serves as cofactor.

Its subcellular location is the cytoplasm. The catalysed reaction is N(6)-[(R)-dihydrolipoyl]-L-lysyl-[protein] + NAD(+) = N(6)-[(R)-lipoyl]-L-lysyl-[protein] + NADH + H(+). Its function is as follows. The branched-chain alpha-keto dehydrogenase complex catalyzes the overall conversion of alpha-keto acids to acyl-CoA and CO(2). It contains multiple copies of 3 enzymatic components: branched-chain alpha-keto acid decarboxylase (E1), lipoamide acyltransferase (E2) and lipoamide dehydrogenase (E3). The chain is Dihydrolipoyl dehydrogenase (lpdA) from Chlamydia trachomatis serovar D (strain ATCC VR-885 / DSM 19411 / UW-3/Cx).